Here is a 170-residue protein sequence, read N- to C-terminus: Adenine phosphoribosyltransferase (170 aa).

Belongs to the purine/pyrimidine phosphoribosyltransferase family. Homodimer.

Its subcellular location is the cytoplasm. The enzyme catalyses AMP + diphosphate = 5-phospho-alpha-D-ribose 1-diphosphate + adenine. It participates in purine metabolism; AMP biosynthesis via salvage pathway; AMP from adenine: step 1/1. Its function is as follows. Catalyzes a salvage reaction resulting in the formation of AMP, that is energically less costly than de novo synthesis. The sequence is that of Adenine phosphoribosyltransferase from Halothermothrix orenii (strain H 168 / OCM 544 / DSM 9562).